The sequence spans 285 residues: Tyrosine recombinase XerA (285 aa).

Residues 7–84 form the Core-binding (CB) domain; it reads IVNSDILEEF…ALKSYFKFEG (78 aa). The Tyr recombinase domain occupies 100–274; that stretch reads SLPKSLTEDE…TTKHLREAIE (175 aa). Active-site residues include Arg-135, Lys-160, His-226, Arg-229, and His-252. The active-site O-(3'-phospho-DNA)-tyrosine intermediate is Tyr-261.

It belongs to the 'phage' integrase family. XerA subfamily.

Its subcellular location is the cytoplasm. Site-specific tyrosine recombinase, which acts by catalyzing the cutting and rejoining of the recombining DNA molecules. The protein is Tyrosine recombinase XerA of Pyrococcus horikoshii (strain ATCC 700860 / DSM 12428 / JCM 9974 / NBRC 100139 / OT-3).